A 231-amino-acid chain; its full sequence is Thrombin-like enzyme leucurobin (231 aa).

The Peptidase S1 domain occupies 1 to 223; it reads VIGGDECDIN…YLPWIQSIIA (223 aa). 6 disulfide bridges follow: C7-C139, C26-C42, C74-C230, C118-C184, C150-C163, and C174-C199. Active-site charge relay system residues include H41 and D86. A glycan (N-linked (GlcNAc...) asparagine) is linked at N146. S178 serves as the catalytic Charge relay system. N225 carries N-linked (GlcNAc...) asparagine glycosylation.

Belongs to the peptidase S1 family. Snake venom subfamily. As to quaternary structure, monomer. In terms of processing, glycosylated. Expressed by the venom gland.

The protein resides in the secreted. The enzyme catalyses Selective cleavage of Arg-|-Xaa bond in fibrinogen, to form fibrin, and release fibrinopeptide A. The specificity of further degradation of fibrinogen varies with species origin of the enzyme.. Its activity is regulated as follows. Inhibited by PMSF and benzamidine. Its clotting effect is strongly inhibited by antibothropic serum. Is not inhibited by heparin. Functionally, thrombin-like snake venom serine protease that cleaves Arg-Gly bonds in alpha-chain of fibrinogen (FGA). Induces temporary episodes of opisthotonos and rapid rolling around the long axis of the animal (gyroxin-like effect), when injected into the tail veins of mice (0.143 ug/g mouse). The protein is Thrombin-like enzyme leucurobin of Bothrops leucurus (Whitetail lancehead).